The sequence spans 826 residues: Beta-galactosidase 7 (826 aa).

A signal peptide spans 1–25 (MKMKHFTRLLSLFFILITSLSLAKS). The N-linked (GlcNAc...) asparagine glycan is linked to asparagine 154. The active-site Proton donor is glutamate 184. The active-site Nucleophile is the glutamate 253. N-linked (GlcNAc...) asparagine glycosylation is found at asparagine 254, asparagine 351, asparagine 380, asparagine 491, asparagine 665, asparagine 706, asparagine 797, and asparagine 801. The region spanning 740 to 826 (AHEHNKVELS…PKKLAVELEC (87 aa)) is the SUEL-type lectin domain.

The protein belongs to the glycosyl hydrolase 35 family. In terms of tissue distribution, expressed in flowers.

Its subcellular location is the secreted. The protein resides in the extracellular space. It localises to the apoplast. The catalysed reaction is Hydrolysis of terminal non-reducing beta-D-galactose residues in beta-D-galactosides.. In Arabidopsis thaliana (Mouse-ear cress), this protein is Beta-galactosidase 7 (BGAL7).